The primary structure comprises 605 residues: Elongation factor 4 (605 aa).

Positions 9–192 (NRIRNFCIIA…AIVQRIPAPA (184 aa)) constitute a tr-type G domain. GTP is bound by residues 21-26 (DHGKST) and 139-142 (NKID).

It belongs to the TRAFAC class translation factor GTPase superfamily. Classic translation factor GTPase family. LepA subfamily.

The protein localises to the cell inner membrane. The catalysed reaction is GTP + H2O = GDP + phosphate + H(+). Its function is as follows. Required for accurate and efficient protein synthesis under certain stress conditions. May act as a fidelity factor of the translation reaction, by catalyzing a one-codon backward translocation of tRNAs on improperly translocated ribosomes. Back-translocation proceeds from a post-translocation (POST) complex to a pre-translocation (PRE) complex, thus giving elongation factor G a second chance to translocate the tRNAs correctly. Binds to ribosomes in a GTP-dependent manner. This chain is Elongation factor 4, found in Pelodictyon phaeoclathratiforme (strain DSM 5477 / BU-1).